We begin with the raw amino-acid sequence, 399 residues long: Tryptophan synthase beta chain (399 aa).

Residue Lys92 is modified to N6-(pyridoxal phosphate)lysine.

The protein belongs to the TrpB family. As to quaternary structure, tetramer of two alpha and two beta chains. Pyridoxal 5'-phosphate serves as cofactor.

It catalyses the reaction (1S,2R)-1-C-(indol-3-yl)glycerol 3-phosphate + L-serine = D-glyceraldehyde 3-phosphate + L-tryptophan + H2O. It participates in amino-acid biosynthesis; L-tryptophan biosynthesis; L-tryptophan from chorismate: step 5/5. In terms of biological role, the beta subunit is responsible for the synthesis of L-tryptophan from indole and L-serine. The chain is Tryptophan synthase beta chain from Legionella pneumophila (strain Corby).